The following is a 361-amino-acid chain: uncharacterized protein (361 aa).

The signal sequence occupies residues 1–28; that stretch reads MSKSKFTKIIVVICIAAMFITGTSILSF.

This is an uncharacterized protein from Ruminiclostridium cellulolyticum (strain ATCC 35319 / DSM 5812 / JCM 6584 / H10) (Clostridium cellulolyticum).